A 535-amino-acid chain; its full sequence is MKDYTLSEFLNRRLALLGERNNLSLLEQCLHGIERECLRVTATAELACTPHPQALGAALTNGQVTTDYSESLLEFITPALKNPAETIDNLDRIHRFVYSKLGDELLWSPSMPCPLPDEEHIPIAYYGTSNIGKLKYVYRKGLALRYGKTMQCIAGIHYNFSLPEDAWALLKQTEDFAGDARDYQSHSYIALIRNFRRYSWLLMYLFGASPALDAGFLRGRKHQLEQHFDADTLYLPYATSLRMSDLGYQSDAQADLTPCYNDLVSYTDSLRKAVATPYKPYVEVGTHDQNGEWVQLNTNVLQIENEYYSNIRPKRVTYSGERPIQALVARGVQYVEVRCLDINPFLPTGISLEQSRFIDAFVLYCALEESQQLARHECSNASSNFLSVVKEGRRPGLSLMRDNRPVDLKTWATELMEKITPIARLLDQAQGIDEHLKSIAVQQAKIDDTALTPSAQVLASMEAHNEGFTAFSLRQSQVHAEYFRTHPLSAQEQADFEAQAKTSIEEQAELEATEEVVDFDTFVGSYQASILSISN.

The protein belongs to the glutamate--cysteine ligase type 1 family. Type 1 subfamily.

The enzyme catalyses L-cysteine + L-glutamate + ATP = gamma-L-glutamyl-L-cysteine + ADP + phosphate + H(+). It participates in sulfur metabolism; glutathione biosynthesis; glutathione from L-cysteine and L-glutamate: step 1/2. The sequence is that of Glutamate--cysteine ligase from Pseudomonas syringae pv. syringae (strain B728a).